The sequence spans 352 residues: MGAALTLLGDLIATVSEAAAATGFSVAEIAAGEAAAAIEVQLASVATVEGLTTSEAIAAIGLIPQAYAVISGAPAAIAGFAALLQTVTGVSAVAQVGYRFFSDWDHKVSTVGLYQQPGMAVDLYRPDDYYDILFPGVQTFVHSVQYLDPRHWGPTLFNAISQAFWRVIQNDIPRLTSQELERRTQRYLRDSLARFLEETTWTVINAPVNWYNSLQDYYSTLSPIRPTMVRQVANREGLQISFGHTYDNIDEADSIQQVTERWEAQSQSPNVQSGEFIEKFEAPGGANQRTAPQWMLPLLLGLYGSVTSALKAYEDGPNKKKRKLSRGSSQKTKGTSASAKARHKRRNRSSRS.

Residue Gly2 is the site of N-myristoyl glycine; by host attachment. The interval 273–308 (SGEFIEKFEAPGGANQRTAPQWMLPLLLGLYGSVTS) is D1. The helical transmembrane segment at 290-310 (TAPQWMLPLLLGLYGSVTSAL) threads the bilayer. Residues 313–352 (YEDGPNKKKRKLSRGSSQKTKGTSASAKARHKRRNRSSRS) are disordered. Positions 313 to 352 (YEDGPNKKKRKLSRGSSQKTKGTSASAKARHKRRNRSSRS) are DNA-binding. The Nuclear localization signal signature appears at 316 to 324 (GPNKKKRKL). A compositionally biased stretch (polar residues) spans 326-338 (RGSSQKTKGTSAS). The segment covering 340–352 (KARHKRRNRSSRS) has biased composition (basic residues).

This sequence belongs to the polyomaviruses capsid protein VP2 family. In terms of assembly, forms homooligomers, and heterooligomers with VP3 in the endoplasmic reticulum membrane. Interacts (via D1 domain) with VP1. Interacts (via D1 domain) with VP1. Interacts (via C-terminus) with host SP1, this is probably also the case for VP2; this interaction represses SP1 activation of the SV40 early promoter and participates in virion assembly. Interacts (via nuclear localization signal) with host importin alpha2-beta heterodimer. As to quaternary structure, oligomerizes with VP3 in the nucleus.

Its subcellular location is the virion. It is found in the host nucleus. The protein localises to the host endoplasmic reticulum. It localises to the host endoplasmic reticulum membrane. Structural protein that resides within the core of the capsid surrounded by 72 VP1 pentamers. Following virus endocytosis and trafficking to the endoplasmic reticulum, VP2 and VP3 form oligomers and integrate into the endoplasmic reticulum membrane. Heterooligomer VP2-VP3 may create a viroporin for transporting the viral genome across the endoplasmic reticulum membrane to the cytoplasm. Nuclear entry of the viral DNA involves the selective exposure and importin recognition of VP2 or VP3 nuclear localization signal (shared C-terminus). Plays a role in virion assembly within the nucleus in particular through a DNA-binding domain located in the C-terminal region. An N-terminal myristoylation suggests a scaffold function for virion assembly. The viral progenies exit the cells by lytic release. Isoform VP2 may repress SP1 activation of the SV40 early promoter, via specific protein-protein and protein-DNA interactions. In terms of biological role, structural protein that resides within the core of the capsid surrounded by 72 VP1 pentamers. Following virus entry, VP2 and VP3 form oligomers and integrate into the endoplasmic reticulum membrane. Heterooligomer VP2-VP3 may create a viroporin for transporting the viral genome across the endoplasmic reticulum membrane. Essential for focus formation and virus endoplasmic reticulum-to-cytosol membrane transport, required to recruit selective cellular components to the foci in the ER membrane. Nuclear entry of the viral DNA involves the selective exposure and importin recognition of VP2 or VP3 nuclear localization signal (shared C-terminus). Isoform VP3 represses SP1 activation of the SV40 early promoter, via specific protein-protein and protein-DNA interactions. SP1 additionally participates in recruiting VP3 to the SV40 minichromosome during SV40 assembly. Plays a role in virion assembly within the nucleus. May initiate host cell lysis when associated with VP4. Its function is as follows. Viroporin inducing perforation of cellular membranes to trigger virus progeny release. Forms pores of 3 nm inner diameter. VP4 is expressed about 24 hours after the late structural proteins and is not incorporated into the mature virion. In Simian virus 40 (SV40), this protein is Minor capsid protein VP2.